The following is a 623-amino-acid chain: MEKREFKAESKRLLDIVINSIYTNREIFLRELISNASDAIDKVYYKTLGDSSLTFNKDDYYIKIKPNKEERTLTISDKGIGMTEKELDENLGVIAKSGSLQFKKENEIKDGFDIIGQFGVGFYSGFLVADKITVITKAFGADKAYKWESDGVDGYTISEAEKDSFGTDIILHLKANDEDENYDEFLEEYKLKSLIKKYSDFIRYPIKLDVTKSRVKEGTENEHEEYVEEETVNSMVPLWRRNKNELTDDDYNNFYVEKRFGFDKPLRHMHISVDGMISYNSILYIPENIPYDYYTKEYEKGLELYSNGVLIMEKCSELLPDYFGFVKGIVDSQDLSLNISREMLQHDRQLSRIAKNIKTKIKNELESMMKNDRESYEKFYKSFGRQLKYGVYDDFGMNKDELKDLLMFYSSKEKKMVSLAEYVERMAEDQKYIYYAVGESNERIEKMPQTEMVLDKGYEILYFTEDVDEFAIKMLMNYKEKEFKSVSSGDLGIESEEENKKENEENKGIFEAMKEALGEKISAVKASSRLKNYPVCLSSEGEVSIEMEKILSAMPNNQGVKAQKVLEVNTNHEVFNSLKDALENDKDKFNLYTKLLYNQALLVEGLSIENPVDFTNDICKLMK.

Residues 1 to 341 (MEKREFKAES…SQDLSLNISR (341 aa)) form an a; substrate-binding region. Positions 342–549 (EMLQHDRQLS…EGEVSIEMEK (208 aa)) are b. The interval 550–623 (ILSAMPNNQG…FTNDICKLMK (74 aa)) is c.

The protein belongs to the heat shock protein 90 family. Homodimer.

Its subcellular location is the cytoplasm. Functionally, molecular chaperone. Has ATPase activity. The protein is Chaperone protein HtpG of Clostridium perfringens (strain 13 / Type A).